The sequence spans 221 residues: Stromal cell-derived factor 2-like protein 1 (221 aa).

A signal peptide spans 1–28 (MWSAGRGGAAWPVLLGLLLALLVPGGGA). MIR domains follow at residues 33–87 (AELV…IRGG), 95–150 (GSPV…VRCS), and 151–205 (GQHW…AMEG). At Ser215 the chain carries Phosphoserine. The Prevents secretion from ER motif lies at 218 to 221 (HDEL).

Part of a large chaperone multiprotein complex comprising CABP1, DNAJB11, HSP90B1, HSPA5, HYOU, PDIA2, PDIA4, PPIB, SDF2L1, UGGT1 and very small amounts of ERP29, but not, or at very low levels, CALR nor CANX. As to expression, ubiquitously expressed with high expression in testis, moderate expression in the pancreas, spleen, prostate, small intestine and colon. Very low expression is seen in brain and skeletal muscle.

The protein localises to the endoplasmic reticulum lumen. The polypeptide is Stromal cell-derived factor 2-like protein 1 (SDF2L1) (Homo sapiens (Human)).